The following is an 887-amino-acid chain: Valine--tRNA ligase (887 aa).

Positions 48-58 match the 'HIGH' region motif; that stretch reads PNVTGVLHVGH. The 'KMSKS' region motif lies at 527-531; the sequence is KMSKS. Lys-530 serves as a coordination point for ATP. Residues 814 to 887 are a coiled coil; it reads LAGLVDIEAE…EASDRLKKLS (74 aa).

This sequence belongs to the class-I aminoacyl-tRNA synthetase family. ValS type 1 subfamily. In terms of assembly, monomer.

It is found in the cytoplasm. It carries out the reaction tRNA(Val) + L-valine + ATP = L-valyl-tRNA(Val) + AMP + diphosphate. Catalyzes the attachment of valine to tRNA(Val). As ValRS can inadvertently accommodate and process structurally similar amino acids such as threonine, to avoid such errors, it has a 'posttransfer' editing activity that hydrolyzes mischarged Thr-tRNA(Val) in a tRNA-dependent manner. This chain is Valine--tRNA ligase, found in Desulfotalea psychrophila (strain LSv54 / DSM 12343).